A 694-amino-acid polypeptide reads, in one-letter code: uncharacterized protein (694 aa).

The 152-residue stretch at 17 to 168 folds into the Resolvase/invertase-type recombinase catalytic domain; that stretch reads DAFLYVRQSS…GGILNKARRG (152 aa). S25 serves as the catalytic O-(5'-phospho-DNA)-serine intermediate. Positions 175–316 form a DNA-binding region, recombinase; it reads PIGLVYTPDA…QAALEQNATG (142 aa). A helical membrane pass occupies residues 386–406; it reads AVSALLLEVMAPAAIDVALAV.

It is found in the membrane. This is an uncharacterized protein from Sinorhizobium fredii (strain NBRC 101917 / NGR234).